The chain runs to 226 residues: ATP synthase subunit a (226 aa).

6 helical membrane-spanning segments follow: residues 17 to 37 (FSYFFHIGLVALIAVIVAMMA), 79 to 99 (LVATLGIIVFFSNIIGIIPGF), 105 to 125 (SLNLTLSLAIIVFVYYHFEGI), 134 to 154 (FAHFMGPIKLLAPLMFPIEIV), 176 to 196 (LFLMVILALVPYIAPLPAYVL), and 199 to 219 (FMAFLQAFIFMILTYVYLAGA).

Belongs to the ATPase A chain family. As to quaternary structure, F-type ATPases have 2 components, CF(1) - the catalytic core - and CF(0) - the membrane proton channel. CF(1) has five subunits: alpha(3), beta(3), gamma(1), delta(1), epsilon(1). CF(0) has three main subunits: a(1), b(2) and c(9-12). The alpha and beta chains form an alternating ring which encloses part of the gamma chain. CF(1) is attached to CF(0) by a central stalk formed by the gamma and epsilon chains, while a peripheral stalk is formed by the delta and b chains.

Its subcellular location is the cell inner membrane. Functionally, key component of the proton channel; it plays a direct role in the translocation of protons across the membrane. This chain is ATP synthase subunit a, found in Campylobacter jejuni subsp. jejuni serotype O:23/36 (strain 81-176).